A 466-amino-acid polypeptide reads, in one-letter code: Integrator complex subunit 12 (466 aa).

The tract at residues lysine 41–methionine 101 is disordered. Low complexity predominate over residues lysine 69–leucine 84. Residues threonine 85–methionine 101 are compositionally biased toward basic and acidic residues. Residues glycine 156–glutamine 212 form a PHD-type zinc finger. Disordered stretches follow at residues methionine 216–alanine 251 and glycine 311–lysine 466. 2 stretches are compositionally biased toward polar residues: residues glutamine 218–serine 233 and glycine 311–lysine 329. Residues proline 338–leucine 373 are compositionally biased toward low complexity. A compositionally biased stretch (polar residues) spans serine 374–glycine 386. Residues proline 392–asparagine 423 are compositionally biased toward low complexity. Residues glutamine 453–lysine 466 are compositionally biased toward basic residues.

Belongs to the Integrator subunit 12 family. In terms of assembly, component of the Integrator complex, composed of core subunits INTS1, INTS2, INTS3, INTS4, INTS5, INTS6, INTS7, INTS8, INTS9/RC74, INTS10, INTS11/CPSF3L, INTS12, INTS13, INTS14 and INTS15. The core complex associates with protein phosphatase 2A subunits PPP2CA and PPP2R1A, to form the Integrator-PP2A (INTAC) complex.

The protein localises to the nucleus. In terms of biological role, component of the integrator complex, a multiprotein complex that terminates RNA polymerase II (Pol II) transcription in the promoter-proximal region of genes. The integrator complex provides a quality checkpoint during transcription elongation by driving premature transcription termination of transcripts that are unfavorably configured for transcriptional elongation: the complex terminates transcription by (1) catalyzing dephosphorylation of the C-terminal domain (CTD) of Pol II subunit POLR2A/RPB1 and SUPT5H/SPT5, (2) degrading the exiting nascent RNA transcript via endonuclease activity and (3) promoting the release of Pol II from bound DNA. The integrator complex is also involved in terminating the synthesis of non-coding Pol II transcripts, such as enhancer RNAs (eRNAs), small nuclear RNAs (snRNAs), telomerase RNAs and long non-coding RNAs (lncRNAs). This chain is Integrator complex subunit 12 (ints12), found in Xenopus tropicalis (Western clawed frog).